We begin with the raw amino-acid sequence, 962 residues long: Probable transport protein MmpL9 (962 aa).

Transmembrane regions (helical) follow at residues 25-45 (LAAI…SVAV), 201-223 (LITG…SIAT), 225-247 (LLIL…FLGY), 256-276 (FVVN…AIFL), 302-322 (ANVI…LSFA), 335-355 (AIGM…IIAI), 383-403 (WPGP…LALP), 768-788 (YDIL…MLMI), 796-816 (LVIV…SVLI), 820-840 (FVGL…LLAV), 867-887 (AMAG…FTMA), and 895-915 (RVIG…TLVV).

The protein belongs to the resistance-nodulation-cell division (RND) (TC 2.A.6) family. MmpL subfamily.

The protein localises to the cell membrane. This is Probable transport protein MmpL9 (mmpL9) from Mycobacterium tuberculosis (strain ATCC 25618 / H37Rv).